Reading from the N-terminus, the 484-residue chain is Aspartyl/glutamyl-tRNA(Asn/Gln) amidotransferase subunit B (484 aa).

Belongs to the GatB/GatE family. GatB subfamily. Heterotrimer of A, B and C subunits.

The catalysed reaction is L-glutamyl-tRNA(Gln) + L-glutamine + ATP + H2O = L-glutaminyl-tRNA(Gln) + L-glutamate + ADP + phosphate + H(+). It carries out the reaction L-aspartyl-tRNA(Asn) + L-glutamine + ATP + H2O = L-asparaginyl-tRNA(Asn) + L-glutamate + ADP + phosphate + 2 H(+). Its function is as follows. Allows the formation of correctly charged Asn-tRNA(Asn) or Gln-tRNA(Gln) through the transamidation of misacylated Asp-tRNA(Asn) or Glu-tRNA(Gln) in organisms which lack either or both of asparaginyl-tRNA or glutaminyl-tRNA synthetases. The reaction takes place in the presence of glutamine and ATP through an activated phospho-Asp-tRNA(Asn) or phospho-Glu-tRNA(Gln). The protein is Aspartyl/glutamyl-tRNA(Asn/Gln) amidotransferase subunit B of Cupriavidus metallidurans (strain ATCC 43123 / DSM 2839 / NBRC 102507 / CH34) (Ralstonia metallidurans).